Reading from the N-terminus, the 994-residue chain is Valine--tRNA ligase (994 aa).

A 'HIGH' region motif is present at residues 43–53; it reads PNVTGTLHMGH. Residues 332–356 form a disordered region; that stretch reads IASGATSDTTDTPSDSDASNASNQH. Residues 333 to 353 are compositionally biased toward low complexity; the sequence is ASGATSDTTDTPSDSDASNAS. The 'KMSKS' region motif lies at 585-589; it reads KMSKS. K588 contributes to the ATP binding site. Residues 691 to 713 are disordered; the sequence is TAHSPAQHQAGQDGQDVPRTPQP. The stretch at 928-994 forms a coiled coil; that stretch reads LIDVDAERAR…NGLRERRTTL (67 aa).

The protein belongs to the class-I aminoacyl-tRNA synthetase family. ValS type 1 subfamily. Monomer.

It localises to the cytoplasm. It carries out the reaction tRNA(Val) + L-valine + ATP = L-valyl-tRNA(Val) + AMP + diphosphate. Functionally, catalyzes the attachment of valine to tRNA(Val). As ValRS can inadvertently accommodate and process structurally similar amino acids such as threonine, to avoid such errors, it has a 'posttransfer' editing activity that hydrolyzes mischarged Thr-tRNA(Val) in a tRNA-dependent manner. The protein is Valine--tRNA ligase of Xylella fastidiosa (strain M23).